The primary structure comprises 331 residues: tRNA-cytidine(32) 2-sulfurtransferase (331 aa).

Residues 71–76 (SGGKDS) carry the PP-loop motif motif. [4Fe-4S] cluster-binding residues include C146, C149, and C237.

Belongs to the TtcA family. Homodimer. Requires Mg(2+) as cofactor. The cofactor is [4Fe-4S] cluster.

It localises to the cytoplasm. The enzyme catalyses cytidine(32) in tRNA + S-sulfanyl-L-cysteinyl-[cysteine desulfurase] + AH2 + ATP = 2-thiocytidine(32) in tRNA + L-cysteinyl-[cysteine desulfurase] + A + AMP + diphosphate + H(+). The protein operates within tRNA modification. In terms of biological role, catalyzes the ATP-dependent 2-thiolation of cytidine in position 32 of tRNA, to form 2-thiocytidine (s(2)C32). The sulfur atoms are provided by the cysteine/cysteine desulfurase (IscS) system. The sequence is that of tRNA-cytidine(32) 2-sulfurtransferase from Burkholderia multivorans (strain ATCC 17616 / 249).